The primary structure comprises 227 residues: Cytochrome c oxidase subunit 2 (227 aa).

The Mitochondrial intermembrane segment spans residues 1 to 14 (MAYPMQLGFQDATS). A helical membrane pass occupies residues 15-45 (PIMEELLHFHDHTLMIVFLISSLVLYIISLM). The Mitochondrial matrix portion of the chain corresponds to 46–59 (LTTKLTHTSTMDAQ). The chain crosses the membrane as a helical span at residues 60 to 87 (EVETIWTILPAIILIMIALPSLRILYMM). Topologically, residues 88–227 (DEINNPSLTV…YFEKWSASML (140 aa)) are mitochondrial intermembrane. Cu cation is bound by residues Cys196, Glu198, Cys200, His204, and Met207. Residue Glu198 participates in Mg(2+) binding. The residue at position 218 (Tyr218) is a Phosphotyrosine.

Belongs to the cytochrome c oxidase subunit 2 family. In terms of assembly, component of the cytochrome c oxidase (complex IV, CIV), a multisubunit enzyme composed of 14 subunits. The complex is composed of a catalytic core of 3 subunits MT-CO1, MT-CO2 and MT-CO3, encoded in the mitochondrial DNA, and 11 supernumerary subunits COX4I, COX5A, COX5B, COX6A, COX6B, COX6C, COX7A, COX7B, COX7C, COX8 and NDUFA4, which are encoded in the nuclear genome. The complex exists as a monomer or a dimer and forms supercomplexes (SCs) in the inner mitochondrial membrane with NADH-ubiquinone oxidoreductase (complex I, CI) and ubiquinol-cytochrome c oxidoreductase (cytochrome b-c1 complex, complex III, CIII), resulting in different assemblies (supercomplex SCI(1)III(2)IV(1) and megacomplex MCI(2)III(2)IV(2)). Found in a complex with TMEM177, COA6, COX18, COX20, SCO1 and SCO2. Interacts with TMEM177 in a COX20-dependent manner. Interacts with COX20. Interacts with COX16. Cu cation is required as a cofactor.

It is found in the mitochondrion inner membrane. It catalyses the reaction 4 Fe(II)-[cytochrome c] + O2 + 8 H(+)(in) = 4 Fe(III)-[cytochrome c] + 2 H2O + 4 H(+)(out). In terms of biological role, component of the cytochrome c oxidase, the last enzyme in the mitochondrial electron transport chain which drives oxidative phosphorylation. The respiratory chain contains 3 multisubunit complexes succinate dehydrogenase (complex II, CII), ubiquinol-cytochrome c oxidoreductase (cytochrome b-c1 complex, complex III, CIII) and cytochrome c oxidase (complex IV, CIV), that cooperate to transfer electrons derived from NADH and succinate to molecular oxygen, creating an electrochemical gradient over the inner membrane that drives transmembrane transport and the ATP synthase. Cytochrome c oxidase is the component of the respiratory chain that catalyzes the reduction of oxygen to water. Electrons originating from reduced cytochrome c in the intermembrane space (IMS) are transferred via the dinuclear copper A center (CU(A)) of subunit 2 and heme A of subunit 1 to the active site in subunit 1, a binuclear center (BNC) formed by heme A3 and copper B (CU(B)). The BNC reduces molecular oxygen to 2 water molecules using 4 electrons from cytochrome c in the IMS and 4 protons from the mitochondrial matrix. The protein is Cytochrome c oxidase subunit 2 (MT-CO2) of Ovis aries (Sheep).